The primary structure comprises 651 residues: DNA ligase (651 aa).

NAD(+)-binding positions include 30-34 (DEEYD), 79-80 (SM), and Glu-105. The active-site N6-AMP-lysine intermediate is Lys-107. Positions 128, 162, and 301 each coordinate NAD(+). Zn(2+)-binding residues include Cys-395, Cys-398, Cys-411, and Cys-416. The BRCT domain occupies 570-651 (ALNENISNKT…NALLGGDDEV (82 aa)).

The protein belongs to the NAD-dependent DNA ligase family. LigA subfamily. Mg(2+) is required as a cofactor. Mn(2+) serves as cofactor.

It carries out the reaction NAD(+) + (deoxyribonucleotide)n-3'-hydroxyl + 5'-phospho-(deoxyribonucleotide)m = (deoxyribonucleotide)n+m + AMP + beta-nicotinamide D-nucleotide.. In terms of biological role, DNA ligase that catalyzes the formation of phosphodiester linkages between 5'-phosphoryl and 3'-hydroxyl groups in double-stranded DNA using NAD as a coenzyme and as the energy source for the reaction. It is essential for DNA replication and repair of damaged DNA. The sequence is that of DNA ligase from Campylobacter lari (strain RM2100 / D67 / ATCC BAA-1060).